Reading from the N-terminus, the 315-residue chain is Beta-ketoacyl-[acyl-carrier-protein] synthase III 2 (315 aa).

Catalysis depends on residues cysteine 113 and histidine 241. Residues 242–246 (QANLR) are ACP-binding. Residue asparagine 271 is part of the active site.

Belongs to the thiolase-like superfamily. FabH family. In terms of assembly, homodimer.

Its subcellular location is the cytoplasm. The enzyme catalyses malonyl-[ACP] + acetyl-CoA + H(+) = 3-oxobutanoyl-[ACP] + CO2 + CoA. Its pathway is lipid metabolism; fatty acid biosynthesis. Its function is as follows. Catalyzes the condensation reaction of fatty acid synthesis by the addition to an acyl acceptor of two carbons from malonyl-ACP. Catalyzes the first condensation reaction which initiates fatty acid synthesis and may therefore play a role in governing the total rate of fatty acid production. Possesses both acetoacetyl-ACP synthase and acetyl transacylase activities. Its substrate specificity determines the biosynthesis of branched-chain and/or straight-chain of fatty acids. The protein is Beta-ketoacyl-[acyl-carrier-protein] synthase III 2 of Streptomyces avermitilis (strain ATCC 31267 / DSM 46492 / JCM 5070 / NBRC 14893 / NCIMB 12804 / NRRL 8165 / MA-4680).